Reading from the N-terminus, the 255-residue chain is MVLVLAEIITVGDELLTGNTVDSNSAYIAQRLTEKGFWVRRITTVGDDVKEIENAVREAISRKPEVLIISGGLGPTHDDVTMLGVANAIGRKLKLCEDCLERIKEFYEELHRKGLIDDPTLNEARKKMAYLPEGSEPLNNTEGAAPGAYVEYEGVKIFILPGMPREMKAMLESEVLPRLGERKFVQKKFLAEITDESKLAPILEDTIERFKVKIHSSPKGFGKYIGIIIFAEDDEVIGKVIRYIEGKGIKFREGW.

Belongs to the CinA family.

This Pyrococcus horikoshii (strain ATCC 700860 / DSM 12428 / JCM 9974 / NBRC 100139 / OT-3) protein is Protein PH0439.